We begin with the raw amino-acid sequence, 504 residues long: MEGRAAGWVRVAAVGWAVAACAVAAGMVARRGAARVRWNRAVAVVRDLEERCATPAELLQRVVNSLAIEMFAGLASDGGSKVRMLLTCVDALPDGSEEGISYAIDLGGTSFRVLKVELGAGSTIINRKVEHQPIPENLTKGTSDDLFNFIASALKNFIEREGGEVEGRALGFTFSFPVRQTSISSGTLIRWTKEFSIEEAVGKDVAQCLNEALARNGLNMKVNVLVNNTVGTLALGHYYDDDTVAAVIIGAGTNACYIERNDAIIKSLGRVTNSERTVVNVEWGSFRPPQIELTPYDICFNNETWNYYDQGFEKMISGVYLGEIARLVFQKMAEESDIFGTAVDGLSTPFVLSTPNLAAIREDDSPDLREVGKILEEHLKLPDVPLKTRKLVARVSDIITRRAARLAAAAIVAILQKIGCDGTLCGSTQVRTMRGVRRRTVVAIEGGLFEGYSVFREYLNEALVEILGEEIAATVSLRVMEEGSGTGAALLAAAYSSARQKNSE.

Residues 7–29 (GWVRVAAVGWAVAACAVAAGMVA) traverse the membrane as a helical segment. In terms of domain architecture, Hexokinase spans 39–493 (NRAVAVVRDL…SGTGAALLAA (455 aa)). A hexokinase small subdomain region spans residues 94-226 (DGSEEGISYA…GLNMKVNVLV (133 aa)). 2 residues coordinate ADP: Gly-108 and Thr-109. D-glucose is bound by residues Thr-192, Lys-193, Asn-227, Asn-254, Glu-282, and Glu-313. Positions 227-482 (NNTVGTLALG…ATVSLRVMEE (256 aa)) are hexokinase large subdomain. Gly-447 lines the ADP pocket.

This sequence belongs to the hexokinase family. In terms of tissue distribution, expressed specifically in stamen.

The protein resides in the plastid. Its subcellular location is the chloroplast outer membrane. The catalysed reaction is a D-hexose + ATP = a D-hexose 6-phosphate + ADP + H(+). It catalyses the reaction D-fructose + ATP = D-fructose 6-phosphate + ADP + H(+). The enzyme catalyses D-glucose + ATP = D-glucose 6-phosphate + ADP + H(+). It participates in carbohydrate metabolism; hexose metabolism. The protein operates within carbohydrate degradation; glycolysis; D-glyceraldehyde 3-phosphate and glycerone phosphate from D-glucose: step 1/4. Functionally, fructose and glucose phosphorylating enzyme. This is Hexokinase-10 (HXK10) from Oryza sativa subsp. japonica (Rice).